The primary structure comprises 442 residues: Inner membrane protein PPF-1, chloroplastic (442 aa).

At 1–108 (MAKTLISSPS…EFVLKVLKDG (108 aa)) the chain is on the lumenal side. Residues 109–129 (LSSVHVPYSYGFAIILLTVIV) traverse the membrane as a helical segment. At 130 to 183 (KAATLPLTKQQVESTLAMQNLQPKIKAIQERYAGNQERIQLETSRLYTQAGVNP) the chain is on the stromal side. Residues 184–204 (LAGCLPTLATIPVWIGLYQAL) traverse the membrane as a helical segment. Residues 205 to 296 (SNVANEGLLT…QKNTLLIFKF (92 aa)) lie on the Lumenal side of the membrane. A helical transmembrane segment spans residues 297–317 (LPLMIGYFSLSVPSGLTIYWF). The Stromal segment spans residues 318–442 (TNNVLSTAQQ…SKRSKRKPVA (125 aa)). 2 disordered regions span residues 350-371 (AGQA…RQLK) and 390-442 (PLAS…KPVA). Residues 358–371 (SKPEKGGERFRQLK) show a composition bias toward basic and acidic residues. The segment covering 414 to 427 (ESNTSKVSQEVQSF) has biased composition (polar residues). The segment covering 431 to 442 (RRSKRSKRKPVA) has biased composition (basic residues).

The protein belongs to the OXA1/ALB3/YidC (TC 2.A.9.2) family. In terms of tissue distribution, highly expressed in apical buds. Low levels of expression in leaves. Not expressed in roots, and stems.

The protein localises to the plastid. Its subcellular location is the chloroplast thylakoid membrane. May be required for the insertion of some integral membrane proteins into the chloroplast thylakoid membrane. May play a role in inhibiting senescence. The protein is Inner membrane protein PPF-1, chloroplastic (PPF-1) of Pisum sativum (Garden pea).